Reading from the N-terminus, the 26-residue chain is Metallothionein (26 aa).

A compositionally biased stretch (low complexity) spans 1 to 14; that stretch reads MGDCGCSGASSCNC. The segment at 1 to 26 is disordered; the sequence is MGDCGCSGASSCNCGSGCSCSNCGSK. Cys4, Cys6, Cys12, Cys14, Cys18, Cys20, and Cys23 together coordinate Cu(+). The span at 15–26 shows a compositional bias: cys residues; the sequence is GSGCSCSNCGSK.

This sequence belongs to the metallothionein superfamily. Type 8 family.

The chain is Metallothionein (cmt) from Neurospora crassa (strain ATCC 24698 / 74-OR23-1A / CBS 708.71 / DSM 1257 / FGSC 987).